The chain runs to 413 residues: Aminopeptidase PepS (413 aa).

A divalent metal cation contacts are provided by glutamate 253, glutamate 319, glutamate 343, histidine 348, histidine 381, and aspartate 383.

The protein belongs to the peptidase M29 family. In terms of assembly, monomer. It depends on Co(2+) as a cofactor. The cofactor is Zn(2+). Mg(2+) serves as cofactor.

Functionally, exhibits a high specificity towards peptides possessing arginine or aromatic amino acids at the N-terminus. Could be involved both in bacterial growth by supplying amino acids. This Streptococcus thermophilus protein is Aminopeptidase PepS (pepS).